The sequence spans 281 residues: Nucleotide-binding protein Daro_0070 (281 aa).

8-15 serves as a coordination point for ATP; that stretch reads GLSGSGKS. Position 57–60 (57–60) interacts with GTP; that stretch reads DARS.

This sequence belongs to the RapZ-like family.

Functionally, displays ATPase and GTPase activities. The chain is Nucleotide-binding protein Daro_0070 from Dechloromonas aromatica (strain RCB).